The sequence spans 377 residues: DAR GTPase 2, mitochondrial (377 aa).

Residues 1–21 (MATAKTWKIAREIGDAVIKAS) constitute a mitochondrion transit peptide. Residues 34-211 (AAAVRAISER…VLDTPGIFPP (178 aa)) enclose the CP-type G domain. The DARXP motif motif lies at 55–59 (DARIP). Residues 82 to 85 (NKME), 110 to 111 (NS), 150 to 155 (NVGKSA), and Gly207 contribute to the GTP site.

It belongs to the TRAFAC class YlqF/YawG GTPase family. MTG1 subfamily.

It is found in the mitochondrion. GTPase that may function in mitochondrial ribosome assembly. This chain is DAR GTPase 2, mitochondrial, found in Arabidopsis thaliana (Mouse-ear cress).